Reading from the N-terminus, the 119-residue chain is Fluoride-specific ion channel FluC 1 (119 aa).

4 helical membrane passes run 6-26, 31-51, 66-86, and 91-111; these read VALV…IAVV, FPWG…AIVY, VVAT…GETI, and RLAA…VLVA.

Belongs to the fluoride channel Fluc/FEX (TC 1.A.43) family.

It is found in the cell membrane. It catalyses the reaction fluoride(in) = fluoride(out). Fluoride-specific ion channel. Important for reducing fluoride concentration in the cell, thus reducing its toxicity. The protein is Fluoride-specific ion channel FluC 1 of Natronomonas pharaonis (strain ATCC 35678 / DSM 2160 / CIP 103997 / JCM 8858 / NBRC 14720 / NCIMB 2260 / Gabara) (Halobacterium pharaonis).